The chain runs to 795 residues: Phenylalanine--tRNA ligase beta subunit (795 aa).

Residues alanine 39–arginine 148 enclose the tRNA-binding domain. The B5 domain maps to proline 401–asparagine 476. Positions 454, 460, 463, and 464 each coordinate Mg(2+). Residues serine 701–arginine 794 form the FDX-ACB domain.

This sequence belongs to the phenylalanyl-tRNA synthetase beta subunit family. Type 1 subfamily. In terms of assembly, tetramer of two alpha and two beta subunits. The cofactor is Mg(2+).

The protein localises to the cytoplasm. The catalysed reaction is tRNA(Phe) + L-phenylalanine + ATP = L-phenylalanyl-tRNA(Phe) + AMP + diphosphate + H(+). The chain is Phenylalanine--tRNA ligase beta subunit from Pectobacterium atrosepticum (strain SCRI 1043 / ATCC BAA-672) (Erwinia carotovora subsp. atroseptica).